The following is a 310-amino-acid chain: tRNA pseudouridine synthase B (310 aa).

Asp47 functions as the Nucleophile in the catalytic mechanism.

This sequence belongs to the pseudouridine synthase TruB family. Type 1 subfamily.

The catalysed reaction is uridine(55) in tRNA = pseudouridine(55) in tRNA. Responsible for synthesis of pseudouridine from uracil-55 in the psi GC loop of transfer RNAs. The polypeptide is tRNA pseudouridine synthase B (Caulobacter sp. (strain K31)).